The sequence spans 603 residues: ABC transporter E family member 1 (603 aa).

4Fe-4S ferredoxin-type domains follow at residues 7–39 (RIAI…KLCI) and 46–75 (KSAF…IINL). ABC transporter domains follow at residues 70-315 (IQII…FLAG) and 344-566 (VKSY…LSHL). ATP contacts are provided by residues 110–117 (GTNGIGKS) and 381–388 (GENGTGKT).

This sequence belongs to the ABC transporter superfamily. ABCE family. In terms of tissue distribution, expressed in roots, stems, leaves, flowers and siliques.

The protein localises to the membrane. This chain is ABC transporter E family member 1 (ABCE1), found in Arabidopsis thaliana (Mouse-ear cress).